The sequence spans 427 residues: L-cysteine:1D-myo-inositol 2-amino-2-deoxy-alpha-D-glucopyranoside ligase (427 aa).

Cys-46 lines the Zn(2+) pocket. Residues 46–49 (CGIT), Thr-61, and 84–86 (NVT) each bind L-cysteinyl-5'-AMP. Positions 48 to 58 (ITPYDATHMGH) match the 'HIGH' region motif. A 'ERGGDP' region motif is present at residues 186 to 191 (ERGGDP). Trp-233 is an L-cysteinyl-5'-AMP binding site. A Zn(2+)-binding site is contributed by Cys-237. 255–257 (GSD) is an L-cysteinyl-5'-AMP binding site. His-262 is a Zn(2+) binding site. Residue Val-289 participates in L-cysteinyl-5'-AMP binding. The 'KMSKS' region signature appears at 295 to 299 (KMSKS).

This sequence belongs to the class-I aminoacyl-tRNA synthetase family. MshC subfamily. In terms of assembly, monomer. It depends on Zn(2+) as a cofactor.

The enzyme catalyses 1D-myo-inositol 2-amino-2-deoxy-alpha-D-glucopyranoside + L-cysteine + ATP = 1D-myo-inositol 2-(L-cysteinylamino)-2-deoxy-alpha-D-glucopyranoside + AMP + diphosphate + H(+). Catalyzes the ATP-dependent condensation of GlcN-Ins and L-cysteine to form L-Cys-GlcN-Ins. The polypeptide is L-cysteine:1D-myo-inositol 2-amino-2-deoxy-alpha-D-glucopyranoside ligase (Catenulispora acidiphila (strain DSM 44928 / JCM 14897 / NBRC 102108 / NRRL B-24433 / ID139908)).